A 122-amino-acid polypeptide reads, in one-letter code: Basic phospholipase A2 Cdr-13 (122 aa).

Cystine bridges form between Cys-26–Cys-115, Cys-28–Cys-44, Cys-43–Cys-95, Cys-49–Cys-122, Cys-50–Cys-88, Cys-57–Cys-81, and Cys-75–Cys-86. Residues Tyr-27, Gly-29, and Gly-31 each contribute to the Ca(2+) site. His-47 is a catalytic residue. Ca(2+) is bound at residue Asp-48. Asp-89 is a catalytic residue.

Ca(2+) is required as a cofactor. In terms of tissue distribution, expressed by the venom gland.

It localises to the secreted. The enzyme catalyses a 1,2-diacyl-sn-glycero-3-phosphocholine + H2O = a 1-acyl-sn-glycero-3-phosphocholine + a fatty acid + H(+). Its function is as follows. Snake venom phospholipase A2 (PLA2) that induces myonecrosis and edema upon subcutaneous injections in mice. In vitro, causes a potent blockade of neuromuscular transmission in young chicken biventer cervicis preparation and produces cytotoxicity in murine C2C12 skeletal muscle myotubes and lack cytolytic activity upon myoblasts in vitro. PLA2 catalyzes the calcium-dependent hydrolysis of the 2-acyl groups in 3-sn-phosphoglycerides. In Crotalus durissus ruruima (South American rattlesnake), this protein is Basic phospholipase A2 Cdr-13.